The sequence spans 534 residues: Pentatricopeptide repeat-containing protein At1g07590, mitochondrial (534 aa).

Residues 1–20 (MRSIIALMRQREYFVQAIRR) constitute a mitochondrion transit peptide. PPR repeat units lie at residues 165–199 (NELL…GYRT), 200–234 (SHLV…KATP), 235–269 (HVST…GVEP), 270–300 (NEVS…IEKS), 305–335 (NWST…IRGF), 339–369 (RSKS…MKNV), 374–408 (ETEQ…GFKP), 409–443 (NSIT…KTSK), and 451–485 (WLET…KYNR).

Belongs to the PPR family. P subfamily.

It is found in the mitochondrion. This Arabidopsis thaliana (Mouse-ear cress) protein is Pentatricopeptide repeat-containing protein At1g07590, mitochondrial.